The sequence spans 171 residues: MNHFELFGLPSQFQLDGSLLSSQFRELQKRFHPDNFATASERDRLMAVQKAAQINDAYQVLKHPISRAEYILAENGTEIRGEQQTMQDPMFLMEQMELREELEDIADSSDPESALFDFDSKVSKMYKQHLASVEQELDQGLWAEAADRVRKLKFIAKLKNEIELVEDKLLG.

The region spanning 2 to 74 is the J domain; sequence NHFELFGLPS…ISRAEYILAE (73 aa).

It belongs to the HscB family. In terms of assembly, interacts with HscA and stimulates its ATPase activity.

In terms of biological role, co-chaperone involved in the maturation of iron-sulfur cluster-containing proteins. Seems to help targeting proteins to be folded toward HscA. The sequence is that of Co-chaperone protein HscB homolog from Vibrio campbellii (strain ATCC BAA-1116).